Here is a 336-residue protein sequence, read N- to C-terminus: tRNA N6-adenosine threonylcarbamoyltransferase (336 aa).

Fe cation-binding residues include histidine 114 and histidine 118. Residues 136-140 (LVSGG), aspartate 169, glycine 182, aspartate 186, and asparagine 275 each bind substrate. Residue aspartate 302 coordinates Fe cation.

This sequence belongs to the KAE1 / TsaD family. It depends on Fe(2+) as a cofactor.

It is found in the cytoplasm. It catalyses the reaction L-threonylcarbamoyladenylate + adenosine(37) in tRNA = N(6)-L-threonylcarbamoyladenosine(37) in tRNA + AMP + H(+). In terms of biological role, required for the formation of a threonylcarbamoyl group on adenosine at position 37 (t(6)A37) in tRNAs that read codons beginning with adenine. Is involved in the transfer of the threonylcarbamoyl moiety of threonylcarbamoyl-AMP (TC-AMP) to the N6 group of A37, together with TsaE and TsaB. TsaD likely plays a direct catalytic role in this reaction. This is tRNA N6-adenosine threonylcarbamoyltransferase from Streptococcus agalactiae serotype III (strain NEM316).